The primary structure comprises 344 residues: tRNA N6-adenosine threonylcarbamoyltransferase (344 aa).

Positions 113 and 117 each coordinate Fe cation. Substrate-binding positions include 135-139 (LVSGG), D169, G182, D186, and N278. Residue D306 coordinates Fe cation. A disordered region spans residues 325-344 (ESPISVGTDPSLSVETPQVF). Residues 326-344 (SPISVGTDPSLSVETPQVF) show a composition bias toward polar residues.

Belongs to the KAE1 / TsaD family. Fe(2+) is required as a cofactor.

The protein localises to the cytoplasm. The enzyme catalyses L-threonylcarbamoyladenylate + adenosine(37) in tRNA = N(6)-L-threonylcarbamoyladenosine(37) in tRNA + AMP + H(+). In terms of biological role, required for the formation of a threonylcarbamoyl group on adenosine at position 37 (t(6)A37) in tRNAs that read codons beginning with adenine. Is involved in the transfer of the threonylcarbamoyl moiety of threonylcarbamoyl-AMP (TC-AMP) to the N6 group of A37, together with TsaE and TsaB. TsaD likely plays a direct catalytic role in this reaction. The protein is tRNA N6-adenosine threonylcarbamoyltransferase of Corynebacterium glutamicum (strain ATCC 13032 / DSM 20300 / JCM 1318 / BCRC 11384 / CCUG 27702 / LMG 3730 / NBRC 12168 / NCIMB 10025 / NRRL B-2784 / 534).